The following is a 355-amino-acid chain: MHKLRKIIHIDMDCFYAAVEMRENPALRDKPIAVGGSVQQRGVLTTCNYPARKFGLHSAMPTGQALKLCPDLILLPVNITLYKQVSHQIKQIFHRYTDNIEPLSLDEAYLDVTDCVQCSGSATWIAEEIRRAIFNELHLTASAGVAPLKFLAKIASDQNKPNGIFVITPGEVDNFVKTLPLSKIPGVGKVTGQKLLQMGLKTCGDVQKLDLTVLLNRFGKFGQRIWQYSHGIDEREVQSHWQRKSVGVEDTLLRNITDIEQGIVELERLYPILEQRIKRACPDIPFERFRKLGVKLKFEDFQVTTLEKSAVEFKRENFIVLLRQIWQRRQGRAIRLVGLQVTIPEQKAEQQMSLW.

In terms of domain architecture, UmuC spans 7 to 188 (IIHIDMDCFY…LPLSKIPGVG (182 aa)). Positions 11 and 106 each coordinate Mg(2+). Residue glutamate 107 is part of the active site.

It belongs to the DNA polymerase type-Y family. Monomer. Mg(2+) serves as cofactor.

It localises to the cytoplasm. It catalyses the reaction DNA(n) + a 2'-deoxyribonucleoside 5'-triphosphate = DNA(n+1) + diphosphate. Poorly processive, error-prone DNA polymerase involved in untargeted mutagenesis. Copies undamaged DNA at stalled replication forks, which arise in vivo from mismatched or misaligned primer ends. These misaligned primers can be extended by PolIV. Exhibits no 3'-5' exonuclease (proofreading) activity. May be involved in translesional synthesis, in conjunction with the beta clamp from PolIII. This Mannheimia succiniciproducens (strain KCTC 0769BP / MBEL55E) protein is DNA polymerase IV.